We begin with the raw amino-acid sequence, 537 residues long: MTAPEPAPESATATARRILAALVEAGVTEIVVAPGSRNAPLSFAAYDAAAAGLVRLHTRLDERTAGFLALGLTRSGRRAAVVCTSGTAVANLHPAVLEAAHAGVDLVVVSADRPARLRGTGANQTTDQVGIFGPLVPTQDASGPVELLTAGPVHLNVPLEEPLVPDDRWLPDVVPGEPAHRVIPASLTVLARGPRTVVVAGDDAGPRVRVLAEQAGWPLLAEPSSGSRTGDNAIRTYRLLLDGDLGARVERVVVGGHPTLSRPVSRLLARPDVEVVDLGAWGVWSERPFPVHSRILGGVGVDAPVDAADGTADDTDWLEEWRTADRAVSARLDALLAAEPGLTPHEVAGAVARALPAGGLLVVGASSPIRDLDLMVPRYDVGARRKVVANRGLAGIDGTISTAVGAALGRPRSTRALTLMGDVTFLHDAGALVIGPGEAVPDLTIVVVNDDGGSIFAMLEQGAAEYADQYDRLFGTPHRVDLASLCAATRTPHWRVDSLAELEHALASPAGGIEVVEAVVRRDNRRDLDERIRALRP.

The protein belongs to the TPP enzyme family. MenD subfamily. Homodimer. Mg(2+) serves as cofactor. It depends on Mn(2+) as a cofactor. Requires thiamine diphosphate as cofactor.

The enzyme catalyses isochorismate + 2-oxoglutarate + H(+) = 5-enolpyruvoyl-6-hydroxy-2-succinyl-cyclohex-3-ene-1-carboxylate + CO2. Its pathway is quinol/quinone metabolism; 1,4-dihydroxy-2-naphthoate biosynthesis; 1,4-dihydroxy-2-naphthoate from chorismate: step 2/7. The protein operates within quinol/quinone metabolism; menaquinone biosynthesis. Its function is as follows. Catalyzes the thiamine diphosphate-dependent decarboxylation of 2-oxoglutarate and the subsequent addition of the resulting succinic semialdehyde-thiamine pyrophosphate anion to isochorismate to yield 2-succinyl-5-enolpyruvyl-6-hydroxy-3-cyclohexene-1-carboxylate (SEPHCHC). This chain is 2-succinyl-5-enolpyruvyl-6-hydroxy-3-cyclohexene-1-carboxylate synthase, found in Nocardioides sp. (strain ATCC BAA-499 / JS614).